A 310-amino-acid chain; its full sequence is Prostate androgen-regulated mucin-like protein 1 homolog (310 aa).

The signal sequence occupies residues 1–20 (MVYKTLFALCILTAGWRVQS). Residues 21-258 (LPTSAPLSVS…EVEHALSSGS (238 aa)) are Extracellular-facing. Residues 40–74 (TIWTSSPQNTDADTASPSNGTHNNSVLPVTASAPT) are compositionally biased toward polar residues. The tract at residues 40-224 (TIWTSSPQNT…VPQEKTPPTT (185 aa)) is disordered. N-linked (GlcNAc...) asparagine glycosylation is found at asparagine 58, asparagine 62, and asparagine 80. Over residues 92 to 103 (SPGSNWEGTNTD) the composition is skewed to polar residues. Low complexity predominate over residues 150–209 (SPQAPASSPSSLSTSPPEVFSVSVTTNHSSTVTSTQPTGAPTAPESPTEESSSDHTPTSH). The N-linked (GlcNAc...) asparagine glycan is linked to asparagine 176. A helical membrane pass occupies residues 259–279 (IAAITVTVIAVVLLVFGVAAY). Residues 280-310 (LKIRHSSYGRLLDDHDYGSWGNYNNPLYDDS) are Cytoplasmic-facing. Residue serine 298 is modified to Phosphoserine.

Belongs to the PARM family. Post-translationally, highly N-glycosylated and O-glycosylated.

It is found in the cell membrane. It localises to the golgi apparatus membrane. The protein resides in the endosome membrane. May regulate TLP1 expression and telomerase activity, thus enabling certain prostatic cells to resist apoptosis. This chain is Prostate androgen-regulated mucin-like protein 1 homolog (PARM1), found in Pongo abelii (Sumatran orangutan).